The following is a 226-amino-acid chain: RNA annealing protein YRA1 (226 aa).

The segment at 1-62 (MSANLDKSLD…PIRKNTRAPP (62 aa)) is disordered. Serine 2 is subject to N-acetylserine. A phosphoserine mark is found at serine 8 and serine 100. The 81-residue stretch at 78–158 (VKVNVEGLPR…SRLRLNLIVD (81 aa)) folds into the RRM domain. The tract at residues 173–226 (AMPQKGGNAPRPVKRGPNRKAAMAKSQNKPKREKPAKKSLEDLDKEMADYFEKK) is disordered. A compositionally biased stretch (basic and acidic residues) spans 208 to 226 (AKKSLEDLDKEMADYFEKK).

Component of the transcription/export (TREX) complex, which is at least is formed of SUB2, TEX1 and YRA1 and the THO complex composed of HPR1, MFT1, THO2 and THP1. Interacts with RDS3 and YRA2.

Its subcellular location is the nucleus. Functionally, RNA-binding RNA annealing protein. May have a role in pre-mRNA metabolism. Component the TREX complex, which operates in coupling transcription elongation to mRNA export. The sequence is that of RNA annealing protein YRA1 (YRA1) from Saccharomyces cerevisiae (strain ATCC 204508 / S288c) (Baker's yeast).